The primary structure comprises 450 residues: Hydrolase ffsE (450 aa).

The active-site Nucleophile is the S266.

It belongs to the AB hydrolase superfamily. FUS2 hydrolase family. Homodimer.

It functions in the pathway mycotoxin biosynthesis. In terms of biological role, hydrolase; part of the gene cluster that mediates the biosynthesis of the cytotoxic leucine-containing cytochalasans, including aspochalasin C, aspochalasin E, TMC-169, flavichalasine F, aspergillin PZ, aspochalasin M and flavichalasine G. The first step in the pathway is catalyzed by the hybrid PKS-NRPS ffsA that utilizes 8 units of malonyl-CoA to iteratively assemble the octaketide chain before addition of L-leucine by the C-terminal NRPS modules. Because ffsA lacks a designated enoylreductase (ER) domain, the required activity is provided the enoyl reductase fssC. The methyltransferase (MT) domain of ffsA catalyzes the alpha-methylation at C10 and C14 using S-adenosyl-L-methionine as the methyl-donating cosubstrate. Reduction by the hydrolyase ffsE, followed by dehydration and intra-molecular Diels-Alder cyclization by the Diels-Alderase ffsF then yield the required isoindolone-fused macrocycle. A number of oxidative steps catalyzed by the tailoring cytochrome P450 monooxygenase ffsD, the FAD-linked oxidoreductase ffsJ and the short-chain dehydrogenase/reductase ffsI, are further required to afford the final products. The polypeptide is Hydrolase ffsE (Aspergillus flavipes).